The primary structure comprises 146 residues: Protein SprT-like (146 aa).

Residues 4 to 142 (NEYVKQVSLE…GRCKGKLRLL (139 aa)) form the SprT-like domain. Zn(2+) is bound at residue His64. The active site involves Glu65. Position 68 (His68) interacts with Zn(2+).

This sequence belongs to the SprT family. Requires Zn(2+) as cofactor.

It localises to the cytoplasm. The polypeptide is Protein SprT-like (Streptococcus gordonii (strain Challis / ATCC 35105 / BCRC 15272 / CH1 / DL1 / V288)).